We begin with the raw amino-acid sequence, 82 residues long: MSYEKVSQATDLVIGTKQTLKALEQEEVLEVVIAKDAEPRVVNKVEAMASVKQIPIIYVDSMKKLGKACGIDVGAATVALKK.

This sequence belongs to the eukaryotic ribosomal protein eL8 family.

The protein is RNA-binding protein BH0128 of Halalkalibacterium halodurans (strain ATCC BAA-125 / DSM 18197 / FERM 7344 / JCM 9153 / C-125) (Bacillus halodurans).